The sequence spans 948 residues: RNA polymerase-associated protein RapA (948 aa).

The region spanning 164–332 is the Helicase ATP-binding domain; sequence EVADRIAPRV…FARLRLLDPN (169 aa). 177 to 184 serves as a coordination point for ATP; that stretch reads DEVGLGKT. The short motif at 278-281 is the DEAH box element; it reads DEAH. In terms of domain architecture, Helicase C-terminal spans 473-627; sequence RVDWLIDTLK…TCPTGNALQH (155 aa).

The protein belongs to the SNF2/RAD54 helicase family. RapA subfamily. In terms of assembly, interacts with the RNAP. Has a higher affinity for the core RNAP than for the holoenzyme. Its ATPase activity is stimulated by binding to RNAP.

Functionally, transcription regulator that activates transcription by stimulating RNA polymerase (RNAP) recycling in case of stress conditions such as supercoiled DNA or high salt concentrations. Probably acts by releasing the RNAP, when it is trapped or immobilized on tightly supercoiled DNA. Does not activate transcription on linear DNA. Probably not involved in DNA repair. This is RNA polymerase-associated protein RapA from Pseudomonas savastanoi pv. phaseolicola (strain 1448A / Race 6) (Pseudomonas syringae pv. phaseolicola (strain 1448A / Race 6)).